The chain runs to 344 residues: Phosphate acyltransferase (344 aa).

It belongs to the PlsX family. As to quaternary structure, homodimer. Probably interacts with PlsY.

Its subcellular location is the cytoplasm. It catalyses the reaction a fatty acyl-[ACP] + phosphate = an acyl phosphate + holo-[ACP]. It functions in the pathway lipid metabolism; phospholipid metabolism. Catalyzes the reversible formation of acyl-phosphate (acyl-PO(4)) from acyl-[acyl-carrier-protein] (acyl-ACP). This enzyme utilizes acyl-ACP as fatty acyl donor, but not acyl-CoA. The protein is Phosphate acyltransferase of Actinobacillus pleuropneumoniae serotype 5b (strain L20).